We begin with the raw amino-acid sequence, 31 residues long: MLTITSYFGFLLAALTITSVLFIGLNKIRLI.

The helical transmembrane segment at 4-24 threads the bilayer; the sequence is ITSYFGFLLAALTITSVLFIG.

Belongs to the PetL family. The 4 large subunits of the cytochrome b6-f complex are cytochrome b6, subunit IV (17 kDa polypeptide, PetD), cytochrome f and the Rieske protein, while the 4 small subunits are PetG, PetL, PetM and PetN. The complex functions as a dimer.

It localises to the plastid. The protein resides in the chloroplast thylakoid membrane. Its function is as follows. Component of the cytochrome b6-f complex, which mediates electron transfer between photosystem II (PSII) and photosystem I (PSI), cyclic electron flow around PSI, and state transitions. PetL is important for photoautotrophic growth as well as for electron transfer efficiency and stability of the cytochrome b6-f complex. This is Cytochrome b6-f complex subunit 6 from Nandina domestica (Heavenly bamboo).